A 421-amino-acid chain; its full sequence is Gamma-glutamyl phosphate reductase (421 aa).

It belongs to the gamma-glutamyl phosphate reductase family.

The protein resides in the cytoplasm. It carries out the reaction L-glutamate 5-semialdehyde + phosphate + NADP(+) = L-glutamyl 5-phosphate + NADPH + H(+). It functions in the pathway amino-acid biosynthesis; L-proline biosynthesis; L-glutamate 5-semialdehyde from L-glutamate: step 2/2. Catalyzes the NADPH-dependent reduction of L-glutamate 5-phosphate into L-glutamate 5-semialdehyde and phosphate. The product spontaneously undergoes cyclization to form 1-pyrroline-5-carboxylate. This chain is Gamma-glutamyl phosphate reductase, found in Acinetobacter baumannii (strain ATCC 17978 / DSM 105126 / CIP 53.77 / LMG 1025 / NCDC KC755 / 5377).